Consider the following 224-residue polypeptide: Proteasome subunit beta (224 aa).

A propeptide spans 1–6 (MDVMKG) (removed in mature form; by autocatalysis). Catalysis depends on T7, which acts as the Nucleophile.

This sequence belongs to the peptidase T1B family. As to quaternary structure, the 20S proteasome core is composed of 14 alpha and 14 beta subunits that assemble into four stacked heptameric rings, resulting in a barrel-shaped structure. The two inner rings, each composed of seven catalytic beta subunits, are sandwiched by two outer rings, each composed of seven alpha subunits. The catalytic chamber with the active sites is on the inside of the barrel. Has a gated structure, the ends of the cylinder being occluded by the N-termini of the alpha-subunits. Is capped at one or both ends by the proteasome regulatory ATPase, PAN.

The protein resides in the cytoplasm. The enzyme catalyses Cleavage of peptide bonds with very broad specificity.. With respect to regulation, the formation of the proteasomal ATPase PAN-20S proteasome complex, via the docking of the C-termini of PAN into the intersubunit pockets in the alpha-rings, triggers opening of the gate for substrate entry. Interconversion between the open-gate and close-gate conformations leads to a dynamic regulation of the 20S proteasome proteolysis activity. Its function is as follows. Component of the proteasome core, a large protease complex with broad specificity involved in protein degradation. The polypeptide is Proteasome subunit beta (Methanocaldococcus sp. (strain FS406-22)).